We begin with the raw amino-acid sequence, 217 residues long: Adenylate kinase (217 aa).

ATP is bound at residue 10–15 (GAGKGT). Positions 30-59 (STGDMFREAVAAGTELGVKVQNILSSGALV) are NMP. AMP-binding positions include T31, R36, 57–59 (ALV), 85–88 (GYPR), and Q92. Residues 126–163 (SRRICPKCGKIYNLISMPPVSDQICDDCGEQLVIREDD) are LID. An ATP-binding site is contributed by R127. Residues C130 and C133 each contribute to the Zn(2+) site. Residue 136–137 (IY) participates in ATP binding. Residues C150 and C153 each coordinate Zn(2+). AMP contacts are provided by R160 and R171. R199 lines the ATP pocket.

It belongs to the adenylate kinase family. In terms of assembly, monomer.

Its subcellular location is the cytoplasm. The catalysed reaction is AMP + ATP = 2 ADP. It functions in the pathway purine metabolism; AMP biosynthesis via salvage pathway; AMP from ADP: step 1/1. Functionally, catalyzes the reversible transfer of the terminal phosphate group between ATP and AMP. Plays an important role in cellular energy homeostasis and in adenine nucleotide metabolism. This is Adenylate kinase from Pseudothermotoga lettingae (strain ATCC BAA-301 / DSM 14385 / NBRC 107922 / TMO) (Thermotoga lettingae).